A 124-amino-acid chain; its full sequence is Phosphoribosyl-AMP cyclohydrolase (124 aa).

Position 82 (Asp82) interacts with Mg(2+). Residue Cys83 coordinates Zn(2+). 2 residues coordinate Mg(2+): Asp84 and Asp86. 2 residues coordinate Zn(2+): Cys99 and Cys106.

The protein belongs to the PRA-CH family. As to quaternary structure, homodimer. Mg(2+) serves as cofactor. Requires Zn(2+) as cofactor.

It is found in the cytoplasm. It carries out the reaction 1-(5-phospho-beta-D-ribosyl)-5'-AMP + H2O = 1-(5-phospho-beta-D-ribosyl)-5-[(5-phospho-beta-D-ribosylamino)methylideneamino]imidazole-4-carboxamide. Its pathway is amino-acid biosynthesis; L-histidine biosynthesis; L-histidine from 5-phospho-alpha-D-ribose 1-diphosphate: step 3/9. Functionally, catalyzes the hydrolysis of the adenine ring of phosphoribosyl-AMP. In Rhizorhabdus wittichii (strain DSM 6014 / CCUG 31198 / JCM 15750 / NBRC 105917 / EY 4224 / RW1) (Sphingomonas wittichii), this protein is Phosphoribosyl-AMP cyclohydrolase.